Consider the following 85-residue polypeptide: Large ribosomal subunit protein bL27 (85 aa).

Residues 1-22 (MAHKKAGGSTRNGRDSESKRLG) form a disordered region.

It belongs to the bacterial ribosomal protein bL27 family.

This is Large ribosomal subunit protein bL27 from Teredinibacter turnerae (strain ATCC 39867 / T7901).